A 475-amino-acid chain; its full sequence is MTNSEQERWSRVKGRLRSTVGEDVYTSWFARMDLEAVQDESVHLSVPTRFLKSWIQAHYAERVLSCWQAEMPEVHRIDLSVRTAMRCATPAKEAPVAVEARRAERGDAKPADTRAPVMTPVAASHDALGGSPLDPRLTFASFVVGRANTLAHAAARQVADGRRGDPVMFNPLYIHAGVGLGKTHLLQAVTWAGNAGGERKVLYLTAEKFMYGFVAALKSQTALAFKEALRGIDVLVIDDLQFLQGKSTQAEFCHTLNALIDAGRQVVIAADRPPSDLESLDDRVRSRLAGGLVVEMATLGEDLRLGILKSRVAAARAHHASFDVPEPVLDYLARSITHNGRDLEGAINRLLAHSKLNNQPVTLDMAEREVRDLVRPQEPKRIKIEDIQRVVARQYNVSRSDLLSSRRTANVVRPRQVAMYLAKTLTLRSLPEIGRRFGGRDHTTVLHAVRKIEALVGKDTTLNDEVEALKRQLQD.

The interval 1–73 (MTNSEQERWS…LSCWQAEMPE (73 aa)) is domain I, interacts with DnaA modulators. Residues 73 to 131 (EVHRIDLSVRTAMRCATPAKEAPVAVEARRAERGDAKPADTRAPVMTPVAASHDALGGS) are domain II. Residues 132-354 (PLDPRLTFAS…GAINRLLAHS (223 aa)) are domain III, AAA+ region. Residues glycine 179, glycine 181, lysine 182, and threonine 183 each contribute to the ATP site. The tract at residues 355-475 (KLNNQPVTLD…VEALKRQLQD (121 aa)) is domain IV, binds dsDNA.

The protein belongs to the DnaA family. Oligomerizes as a right-handed, spiral filament on DNA at oriC.

Its subcellular location is the cytoplasm. Functionally, plays an essential role in the initiation and regulation of chromosomal replication. ATP-DnaA binds to the origin of replication (oriC) to initiate formation of the DNA replication initiation complex once per cell cycle. Binds the DnaA box (a 9 base pair repeat at the origin) and separates the double-stranded (ds)DNA. Forms a right-handed helical filament on oriC DNA; dsDNA binds to the exterior of the filament while single-stranded (ss)DNA is stabiized in the filament's interior. The ATP-DnaA-oriC complex binds and stabilizes one strand of the AT-rich DNA unwinding element (DUE), permitting loading of DNA polymerase. After initiation quickly degrades to an ADP-DnaA complex that is not apt for DNA replication. Binds acidic phospholipids. This is Chromosomal replication initiator protein DnaA from Bradyrhizobium sp. (strain BTAi1 / ATCC BAA-1182).